A 167-amino-acid chain; its full sequence is Pathogenesis-related protein PRMS (167 aa).

Residues 1-27 (MEASNKLAVLLLWLVMAAATAVHPSYS) form the signal peptide. Positions 37-155 (PQNSARAAVG…NRGVFIICNY (119 aa)) constitute an SCP domain. Intrachain disulfides connect cysteine 71–cysteine 143, cysteine 116–cysteine 122, and cysteine 138–cysteine 153.

The protein belongs to the CRISP family.

In terms of biological role, probably involved in the defense reaction of plants against pathogens. This chain is Pathogenesis-related protein PRMS (PRMS), found in Zea mays (Maize).